Here is a 177-residue protein sequence, read N- to C-terminus: Inorganic pyrophosphatase (177 aa).

Residues Lys-30, Arg-44, and Tyr-56 each coordinate substrate. The Mg(2+) site is built by Asp-66, Asp-71, and Asp-103. Residue Tyr-142 coordinates substrate.

This sequence belongs to the PPase family. As to quaternary structure, homohexamer. Requires Mg(2+) as cofactor.

The protein localises to the cytoplasm. It catalyses the reaction diphosphate + H2O = 2 phosphate + H(+). In terms of biological role, catalyzes the hydrolysis of inorganic pyrophosphate (PPi) forming two phosphate ions. This Agrobacterium fabrum (strain C58 / ATCC 33970) (Agrobacterium tumefaciens (strain C58)) protein is Inorganic pyrophosphatase.